The following is an 804-amino-acid chain: G-type lectin S-receptor-like serine/threonine-protein kinase At1g61490 (804 aa).

An N-terminal signal peptide occupies residues 1 to 24 (MGKKRIVFFACLLLFTVLLRFSYA). The Bulb-type lectin domain maps to 25–144 (GITTESPLSV…ASGRTLWESF (120 aa)). The Extracellular segment spans residues 25 to 425 (GITTESPLSV…SELGGNKRNK (401 aa)). N-linked (GlcNAc...) asparagine glycosylation is found at asparagine 53, asparagine 94, asparagine 117, asparagine 134, asparagine 236, and asparagine 267. Residues 278–314 (PANSCDIYGVCGPFGLCIVSVPLKCKCLKGFVPHSTE) form the EGF-like domain. Disulfide bonds link cysteine 282/cysteine 294 and cysteine 288/cysteine 302. Residues asparagine 320, asparagine 336, and asparagine 375 are each glycosylated (N-linked (GlcNAc...) asparagine). Residues 333 to 415 (CQGNSTGKDV…GEILSIRLAH (83 aa)) form the PAN domain. 2 disulfides stabilise this stretch: cysteine 368-cysteine 389 and cysteine 372-cysteine 378. The chain crosses the membrane as a helical span at residues 426–446 (IIVASTVSLSLFVILTSAAFG). Topologically, residues 447–804 (FWRYRVKHKA…EMTQSMILGR (358 aa)) are cytoplasmic. In terms of domain architecture, Protein kinase spans 490 to 775 (FSLSNKLGQG…DLPSPKQPTF (286 aa)). ATP-binding positions include 496–504 (LGQGGFGSV) and lysine 518. Residues serine 524 and serine 539 each carry the phosphoserine modification. The segment at 579 to 596 (RKKLEVDWPKRFDIVQGI) is caM-binding. Aspartate 615 functions as the Proton acceptor in the catalytic mechanism. Phosphoserine occurs at positions 619 and 632. A Phosphothreonine modification is found at threonine 649. The residue at position 692 (serine 692) is a Phosphoserine.

It belongs to the protein kinase superfamily. Ser/Thr protein kinase family.

The protein localises to the cell membrane. It catalyses the reaction L-seryl-[protein] + ATP = O-phospho-L-seryl-[protein] + ADP + H(+). It carries out the reaction L-threonyl-[protein] + ATP = O-phospho-L-threonyl-[protein] + ADP + H(+). The chain is G-type lectin S-receptor-like serine/threonine-protein kinase At1g61490 from Arabidopsis thaliana (Mouse-ear cress).